Reading from the N-terminus, the 364-residue chain is SVP1-like protein 2 (364 aa).

WD repeat units lie at residues 173-213 and 218-257; these read AHDS…KICE and YQHT…NTIR.

Belongs to the WD repeat PROPPIN family.

It localises to the vacuole membrane. It is found in the cytoplasmic vesicle membrane. The protein resides in the preautophagosomal structure membrane. Its function is as follows. Involved in mitochondrial or peroxisomal functions and amino acid signaling pathways. The sequence is that of SVP1-like protein 2 (hsv2) from Schizosaccharomyces pombe (strain 972 / ATCC 24843) (Fission yeast).